A 71-amino-acid polypeptide reads, in one-letter code: General transcription and DNA repair factor IIH subunit TFB5 (71 aa).

Belongs to the TFB5 family. In terms of assembly, component of the 7-subunit TFIIH core complex composed of XPB, XPD, TFB1/GTF2H1, GTF2H2/P44, TFB4/GTF2H3, TFB2/GTF2H4 and TFB5/GTF2H5, which is active in NER. The core complex associates with the 3-subunit CDK-activating kinase (CAK) module composed of CYCH1/cyclin H1, CDKD and MAT1/At4g30820 to form the 10-subunit holoenzyme (holo-TFIIH) active in transcription.

It is found in the nucleus. Its function is as follows. Component of the general transcription and DNA repair factor IIH (TFIIH) core complex, which is involved in general and transcription-coupled nucleotide excision repair (NER) of damaged DNA and, when complexed to CAK, in RNA transcription by RNA polymerase II. In NER, TFIIH acts by opening DNA around the lesion to allow the excision of the damaged oligonucleotide and its replacement by a new DNA fragment. In transcription, TFIIH has an essential role in transcription initiation. When the pre-initiation complex (PIC) has been established, TFIIH is required for promoter opening and promoter escape. Phosphorylation of the C-terminal tail (CTD) of the largest subunit of RNA polymerase II by the kinase module CAK controls the initiation of transcription. This chain is General transcription and DNA repair factor IIH subunit TFB5, found in Arabidopsis thaliana (Mouse-ear cress).